The sequence spans 182 residues: Inosine/xanthosine triphosphatase (182 aa).

The protein belongs to the YjjX NTPase family. In terms of assembly, homodimer. Mg(2+) is required as a cofactor. Requires Mn(2+) as cofactor.

The enzyme catalyses XTP + H2O = XDP + phosphate + H(+). It carries out the reaction ITP + H2O = IDP + phosphate + H(+). In terms of biological role, phosphatase that hydrolyzes non-canonical purine nucleotides such as XTP and ITP to their respective diphosphate derivatives. Probably excludes non-canonical purines from DNA/RNA precursor pool, thus preventing their incorporation into DNA/RNA and avoiding chromosomal lesions. This is Inosine/xanthosine triphosphatase from Vibrio parahaemolyticus serotype O3:K6 (strain RIMD 2210633).